We begin with the raw amino-acid sequence, 196 residues long: Imidazoleglycerol-phosphate dehydratase (196 aa).

The protein belongs to the imidazoleglycerol-phosphate dehydratase family.

It is found in the cytoplasm. It carries out the reaction D-erythro-1-(imidazol-4-yl)glycerol 3-phosphate = 3-(imidazol-4-yl)-2-oxopropyl phosphate + H2O. Its pathway is amino-acid biosynthesis; L-histidine biosynthesis; L-histidine from 5-phospho-alpha-D-ribose 1-diphosphate: step 6/9. The protein is Imidazoleglycerol-phosphate dehydratase of Phenylobacterium zucineum (strain HLK1).